We begin with the raw amino-acid sequence, 199 residues long: 7-methyl-GTP pyrophosphatase (199 aa).

Asp76 acts as the Proton acceptor in catalysis.

The protein belongs to the Maf family. YceF subfamily. A divalent metal cation is required as a cofactor.

It localises to the cytoplasm. It carries out the reaction N(7)-methyl-GTP + H2O = N(7)-methyl-GMP + diphosphate + H(+). Functionally, nucleoside triphosphate pyrophosphatase that hydrolyzes 7-methyl-GTP (m(7)GTP). May have a dual role in cell division arrest and in preventing the incorporation of modified nucleotides into cellular nucleic acids. In Hahella chejuensis (strain KCTC 2396), this protein is 7-methyl-GTP pyrophosphatase.